The following is a 240-amino-acid chain: Protein RoBo-1 (240 aa).

A signal peptide spans 1-26; that stretch reads MSWFLVLKCLLTVCIISHLSVSSTES. Residue asparagine 42 is glycosylated (N-linked (GlcNAc...) asparagine). Disulfide bonds link cysteine 47/cysteine 76, cysteine 81/cysteine 102, cysteine 103/cysteine 108, cysteine 127/cysteine 151, and cysteine 144/cysteine 171. N-linked (GlcNAc...) asparagine glycosylation is present at asparagine 153.

It belongs to the CNF-like-inhibitor family. N-glycosylated. Expressed abundantly in bone, including the lengthening growth plate where cartilage is remodeled into bone.

The protein resides in the secreted. In terms of biological role, may play a novel role in the growth or remodeling of bone. The polypeptide is Protein RoBo-1 (Rattus norvegicus (Rat)).